We begin with the raw amino-acid sequence, 487 residues long: Betaine aldehyde dehydrogenase 1 (487 aa).

K(+) contacts are provided by S26, I27, and D93. Residue G150–W152 coordinates NAD(+). K162 functions as the Charge relay system in the catalytic mechanism. NAD(+) is bound by residues K176–E179 and S229–T232. L244 contributes to the K(+) binding site. The active-site Proton acceptor is the E250. Residues G252, C284, and E384 each coordinate NAD(+). C284 acts as the Nucleophile in catalysis. A Cysteine sulfenic acid (-SOH) modification is found at C284. K(+) contacts are provided by K454 and G457. E461 (charge relay system) is an active-site residue.

It belongs to the aldehyde dehydrogenase family. Dimer of dimers. K(+) serves as cofactor.

It catalyses the reaction betaine aldehyde + NAD(+) + H2O = glycine betaine + NADH + 2 H(+). It functions in the pathway amine and polyamine biosynthesis; betaine biosynthesis via choline pathway; betaine from betaine aldehyde: step 1/1. Involved in the biosynthesis of the osmoprotectant glycine betaine. Catalyzes the irreversible oxidation of betaine aldehyde to the corresponding acid. The polypeptide is Betaine aldehyde dehydrogenase 1 (Rhizobium meliloti (strain 1021) (Ensifer meliloti)).